The chain runs to 137 residues: Probable calcium-binding protein CML33 (137 aa).

EF-hand domains are found at residues 1 to 36 (MNNMSLSDIFERFDTSKDGKISWEEFRDAIHALSPS), 37 to 72 (IPSEKLVEMFIQLDTNGDGQVDAAKFASCMDQTAQS), 76 to 111 (DVEKELKDAFKLYDINCDGKISANELHVVMTRLGEK), and 112 to 137 (CTVESCVGMVQAIDVDGDGYIRFVGV). The Ca(2+) site is built by Asp-14, Ser-16, Asp-18, Lys-20, and Glu-25. Ca(2+)-binding residues include Asp-89, Asn-91, Asp-93, Lys-95, and Glu-100.

Its function is as follows. Potential calcium sensor. This Arabidopsis thaliana (Mouse-ear cress) protein is Probable calcium-binding protein CML33 (CML33).